The sequence spans 186 residues: Protein YABBY 2 (186 aa).

Residues Cys-17–Cys-44 form a C4-type zinc finger.

It belongs to the YABBY family. Expressed in leaf blades, leaf sheaths and flowers.

It is found in the nucleus. The protein is Protein YABBY 2 (YAB2) of Oryza sativa subsp. japonica (Rice).